Reading from the N-terminus, the 226-residue chain is PKHD-type hydroxylase Sfri_0612 (226 aa).

The 101-residue stretch at 77-177 (KIFPPCFNRY…RIAAITWMQS (101 aa)) folds into the Fe2OG dioxygenase domain. Fe cation is bound by residues histidine 95, aspartate 97, and histidine 158. A 2-oxoglutarate-binding site is contributed by arginine 168.

Fe(2+) is required as a cofactor. The cofactor is L-ascorbate.

This Shewanella frigidimarina (strain NCIMB 400) protein is PKHD-type hydroxylase Sfri_0612.